The primary structure comprises 289 residues: ATP synthase gamma chain (289 aa).

Belongs to the ATPase gamma chain family. F-type ATPases have 2 components, CF(1) - the catalytic core - and CF(0) - the membrane proton channel. CF(1) has five subunits: alpha(3), beta(3), gamma(1), delta(1), epsilon(1). CF(0) has three main subunits: a, b and c.

It localises to the cell inner membrane. Its function is as follows. Produces ATP from ADP in the presence of a proton gradient across the membrane. The gamma chain is believed to be important in regulating ATPase activity and the flow of protons through the CF(0) complex. This is ATP synthase gamma chain from Haemophilus influenzae (strain ATCC 51907 / DSM 11121 / KW20 / Rd).